Here is a 291-residue protein sequence, read N- to C-terminus: Pyridoxal 5'-phosphate synthase subunit PdxS (291 aa).

D-ribose 5-phosphate is bound at residue D23. K80 serves as the catalytic Schiff-base intermediate with D-ribose 5-phosphate. G152 is a binding site for D-ribose 5-phosphate. R164 lines the D-glyceraldehyde 3-phosphate pocket. Residues G213 and 234 to 235 contribute to the D-ribose 5-phosphate site; that span reads GS.

It belongs to the PdxS/SNZ family. In terms of assembly, in the presence of PdxT, forms a dodecamer of heterodimers.

The enzyme catalyses aldehydo-D-ribose 5-phosphate + D-glyceraldehyde 3-phosphate + L-glutamine = pyridoxal 5'-phosphate + L-glutamate + phosphate + 3 H2O + H(+). Its pathway is cofactor biosynthesis; pyridoxal 5'-phosphate biosynthesis. In terms of biological role, catalyzes the formation of pyridoxal 5'-phosphate from ribose 5-phosphate (RBP), glyceraldehyde 3-phosphate (G3P) and ammonia. The ammonia is provided by the PdxT subunit. Can also use ribulose 5-phosphate and dihydroxyacetone phosphate as substrates, resulting from enzyme-catalyzed isomerization of RBP and G3P, respectively. The sequence is that of Pyridoxal 5'-phosphate synthase subunit PdxS from Haemophilus influenzae (strain PittGG).